Reading from the N-terminus, the 886-residue chain is Isoleucine--tRNA ligase (886 aa).

The short motif at 60–70 (PYANGDIHIGH) is the 'HIGH' region element. E546 is a binding site for L-isoleucyl-5'-AMP. The 'KMSKS' region signature appears at 587-591 (KMSKS). Residue K590 participates in ATP binding. Positions 856, 859, 870, and 873 each coordinate Zn(2+).

It belongs to the class-I aminoacyl-tRNA synthetase family. IleS type 1 subfamily. Monomer. Zn(2+) serves as cofactor.

The protein resides in the cytoplasm. The catalysed reaction is tRNA(Ile) + L-isoleucine + ATP = L-isoleucyl-tRNA(Ile) + AMP + diphosphate. In terms of biological role, catalyzes the attachment of isoleucine to tRNA(Ile). As IleRS can inadvertently accommodate and process structurally similar amino acids such as valine, to avoid such errors it has two additional distinct tRNA(Ile)-dependent editing activities. One activity is designated as 'pretransfer' editing and involves the hydrolysis of activated Val-AMP. The other activity is designated 'posttransfer' editing and involves deacylation of mischarged Val-tRNA(Ile). This chain is Isoleucine--tRNA ligase, found in Mesomycoplasma hyopneumoniae (strain 7448) (Mycoplasma hyopneumoniae).